A 250-amino-acid polypeptide reads, in one-letter code: DSC E3 ubiquitin ligase complex subunit 3 (250 aa).

Residues 105 to 130 (LASQDQAQSGLNSNSESPDDLQNAQT) are disordered. Residues 107–130 (SQDQAQSGLNSNSESPDDLQNAQT) show a composition bias toward polar residues. An N-linked (GlcNAc...) asparagine glycan is attached at Asn-187. Transmembrane regions (helical) follow at residues 199–219 (TLLA…YFLW) and 228–248 (MQLS…LHSY).

This sequence belongs to the dsc3 family. As to quaternary structure, component of the DSC E3 ubiquitin ligase complex composed of dsc1, dsc2, dsc3 and dsc4.

It is found in the endoplasmic reticulum membrane. Its subcellular location is the golgi apparatus membrane. Its pathway is protein modification; protein ubiquitination. Component of the DSC E3 ubiquitin ligase complex which is required for the sre1 transcriptional activator proteolytic cleavage to release the soluble transcription factor from the membrane in low oxygen or sterol conditions. The complex also plays an important role in the multivesicular body (MVB) pathway and functions in a post-endoplasmic reticulum pathway for protein degradation. The polypeptide is DSC E3 ubiquitin ligase complex subunit 3 (dsc3) (Schizosaccharomyces pombe (strain 972 / ATCC 24843) (Fission yeast)).